The sequence spans 460 residues: Probable carboxypeptidase ARB_01041 (460 aa).

A signal peptide spans 1-22; the sequence is MQKTYIWALVSLLASSLVDARS. An N-linked (GlcNAc...) asparagine glycan is attached at N98. D175 provides a ligand contact to Zn(2+). E207 acts as the Proton acceptor in catalysis. Residue E208 participates in Zn(2+) binding. N395 is a glycosylation site (N-linked (GlcNAc...) asparagine).

Belongs to the peptidase M20A family. Requires Zn(2+) as cofactor.

It localises to the secreted. The chain is Probable carboxypeptidase ARB_01041 from Arthroderma benhamiae (strain ATCC MYA-4681 / CBS 112371) (Trichophyton mentagrophytes).